The following is a 142-amino-acid chain: Large ribosomal subunit protein mL42 (142 aa).

The N-terminal 32 residues, 1 to 32 (MAVAAVKWVMSKRTILKHLFPVQNGALYCVCH), are a transit peptide targeting the mitochondrion.

It belongs to the mitochondrion-specific ribosomal protein mL42 family. Component of the mitochondrial large ribosomal subunit (mt-LSU). Mature mammalian 55S mitochondrial ribosomes consist of a small (28S) and a large (39S) subunit. The 28S small subunit contains a 12S ribosomal RNA (12S mt-rRNA) and 30 different proteins. The 39S large subunit contains a 16S rRNA (16S mt-rRNA), a copy of mitochondrial valine transfer RNA (mt-tRNA(Val)), which plays an integral structural role, and 52 different proteins.

The protein resides in the mitochondrion. The polypeptide is Large ribosomal subunit protein mL42 (MRPL42) (Homo sapiens (Human)).